A 175-amino-acid polypeptide reads, in one-letter code: Apoptosis regulator Bcl-2 homolog (175 aa).

Residues 152–174 form a helical membrane-spanning segment; that stretch reads YYVTRYFRVAAFIITSLAVINLF.

As to quaternary structure, interacts with host BAK1 and BAX as well as other BH3-containing proteins including BIM, BID or PUMA.

It localises to the host membrane. Plays a role in the inhibition of host apoptosis. Interacts with host proapoptotic factors BAK1 and BAX to supposedly prevent their activation. This is Apoptosis regulator Bcl-2 homolog (CNPV058) from Canarypox virus (CNPV).